The following is a 584-amino-acid chain: Protein phosphatase 2A scaffold subunit (584 aa).

HEAT repeat units lie at residues 7 to 45 (ESDD…ALGP), 46 to 84 (ERTR…FVGG), 86 to 123 (EHAV…EIPT), 168 to 206 (LRKT…VKSE), 207 to 239 (ILPL…MLTN), 240 to 278 (EENI…SMGT), 279 to 317 (EITK…LLTK), 318 to 356 (EMNI…IYGK), 358 to 395 (DTLT…VIGI), 397 to 434 (MLSQ…QLGV), 441 to 479 (LGNL…AKNN), 480 to 512 (IIPK…VVGG), 513 to 551 (DVIS…LLDS), and 553 to 584 (IVQS…LQLC).

This sequence belongs to the phosphatase 2A regulatory subunit A family. As to quaternary structure, component of the Sca1 complex composed of at least gefA, gefH, scaA, phr, and the protein phosphatase 2A subunits pppA and pho2B.

The protein resides in the cytoplasm. Its subcellular location is the cytosol. The protein localises to the cell membrane. Its function is as follows. Scaffolding molecule which may coordinate the assembly of the catalytic subunit and a variable regulatory B subunit. Component of the Sca1 complex, a regulator of cell motility, chemotaxis and signal relay. The Sca1 complex is recruited to the plasma membrane in a chemoattractant- and F-actin-dependent manner and is enriched at the leading edge of chemotaxing cells where it regulates F-actin dynamics and signal relay by controlling the activation of rasC and the downstream target of rapamycin complex 2 (TORC2)-Akt/protein kinase B (PKB) pathway. The sequence is that of Protein phosphatase 2A scaffold subunit (pppA) from Dictyostelium discoideum (Social amoeba).